We begin with the raw amino-acid sequence, 375 residues long: MNCNYFGICASCTLFDKTYEEQLNYKIQREKERFSNFTNIDFDIIKSNESNFRNRAEFRIWWEKGENNKEILSYAMNDFKKNILKINSCEMVSFHIKELMPKLIDELQNDLELSFKLFAVEFLGSSTKDMLVTLIYHKKLEESWIQKAKEIEKKLNIKIIGRSKKQRLVLTNDYINETLNISNQNFFFAYEENGFTQPNTNVNVQMIEWVLENTKNSSKDLCELYCGGGNFTIPLSTKFRKVLATEISKTSIKSALRNCSLNKIESISFIRMSAEDFVQALNKVRAFNRLKDINLDDYEFDTIFMDPPRSGLDDTTRNLAKDFENIIYISCNPETLHRDLEELTKTHEIEKFALFDQFAFTNHIESGVILRKLKD.

S-adenosyl-L-methionine is bound by residues Q197, Y225, N230, E246, and D306. Catalysis depends on C331, which acts as the Nucleophile. Catalysis depends on E365, which acts as the Proton acceptor.

Belongs to the class I-like SAM-binding methyltransferase superfamily. RNA M5U methyltransferase family. TrmA subfamily.

The enzyme catalyses uridine(54) in tRNA + S-adenosyl-L-methionine = 5-methyluridine(54) in tRNA + S-adenosyl-L-homocysteine + H(+). The catalysed reaction is uridine(341) in tmRNA + S-adenosyl-L-methionine = 5-methyluridine(341) in tmRNA + S-adenosyl-L-homocysteine + H(+). Functionally, dual-specificity methyltransferase that catalyzes the formation of 5-methyluridine at position 54 (m5U54) in all tRNAs, and that of position 341 (m5U341) in tmRNA (transfer-mRNA). The chain is tRNA/tmRNA (uracil-C(5))-methyltransferase from Aliarcobacter butzleri (strain RM4018) (Arcobacter butzleri).